Consider the following 114-residue polypeptide: Large ribosomal subunit protein bL19 (114 aa).

This sequence belongs to the bacterial ribosomal protein bL19 family.

Functionally, this protein is located at the 30S-50S ribosomal subunit interface and may play a role in the structure and function of the aminoacyl-tRNA binding site. The chain is Large ribosomal subunit protein bL19 from Clostridium botulinum (strain Loch Maree / Type A3).